The primary structure comprises 200 residues: Imidazole glycerol phosphate synthase subunit HisH (200 aa).

The Glutamine amidotransferase type-1 domain occupies Asp3–Pro200. The active-site Nucleophile is the Cys78. Residues His179 and Glu181 contribute to the active site.

Heterodimer of HisH and HisF.

It localises to the cytoplasm. The catalysed reaction is 5-[(5-phospho-1-deoxy-D-ribulos-1-ylimino)methylamino]-1-(5-phospho-beta-D-ribosyl)imidazole-4-carboxamide + L-glutamine = D-erythro-1-(imidazol-4-yl)glycerol 3-phosphate + 5-amino-1-(5-phospho-beta-D-ribosyl)imidazole-4-carboxamide + L-glutamate + H(+). It carries out the reaction L-glutamine + H2O = L-glutamate + NH4(+). Its pathway is amino-acid biosynthesis; L-histidine biosynthesis; L-histidine from 5-phospho-alpha-D-ribose 1-diphosphate: step 5/9. In terms of biological role, IGPS catalyzes the conversion of PRFAR and glutamine to IGP, AICAR and glutamate. The HisH subunit catalyzes the hydrolysis of glutamine to glutamate and ammonia as part of the synthesis of IGP and AICAR. The resulting ammonia molecule is channeled to the active site of HisF. The chain is Imidazole glycerol phosphate synthase subunit HisH from Xanthomonas oryzae pv. oryzae (strain MAFF 311018).